A 170-amino-acid polypeptide reads, in one-letter code: Flavin reductase (NADPH) (170 aa).

This sequence belongs to the non-flavoprotein flavin reductase family.

It carries out the reaction reduced riboflavin + NADP(+) = riboflavin + NADPH + 2 H(+). Catalyzes the NADH-dependent reduction of FAD to provide FADH2 for the halogenase RebH. The sequence is that of Flavin reductase (NADPH) (rbmH) from Lentzea aerocolonigenes (Lechevalieria aerocolonigenes).